A 248-amino-acid chain; its full sequence is Small ribosomal subunit protein uS2 (248 aa).

Belongs to the universal ribosomal protein uS2 family.

The polypeptide is Small ribosomal subunit protein uS2 (Leptothrix cholodnii (strain ATCC 51168 / LMG 8142 / SP-6) (Leptothrix discophora (strain SP-6))).